Here is a 405-residue protein sequence, read N- to C-terminus: MDHLPMPKFGPLAGLRVVFSGIEIAGPFAGQMFAEWGAEVIWIENVAWADTIRVQPNYPQLSRRNLHALSLNIFKDEGREAFLKLMETTDIFIEASKGPAFARRGITDEVLWQHNPKLVIAHLSGFGQYGTEEYTNLPAYNTIAQAFSGYLIQNGDVDQPMPAFPYTADYFSGLTATTAALAALHKVRETGKGESIDIAMYEVMLRMGQYFMMDYFNGGEMCPRMSKGKDPYYAGCGLYKCADGYIVMELVGITQIEECFKDIGLAHLLGTPEIPEGTQLIHRIECPYGPLVEEKLDAWLAAHTIAEVKERFAELNIACAKVLTVPELESNPQYVARESITQWQTMDGRTCKGPNIMPKFKNNPGQIWRGMPSHGMDTAAILKNIGYSENDIQELVSKGLAKVED.

CoA contacts are provided by K97 and R104. D169 acts as the Nucleophile in catalysis.

This sequence belongs to the CoA-transferase III family. CaiB subfamily. As to quaternary structure, homodimer.

The protein localises to the cytoplasm. It catalyses the reaction crotonobetainyl-CoA + (R)-carnitine = crotonobetaine + (R)-carnitinyl-CoA. The catalysed reaction is 4-(trimethylamino)butanoyl-CoA + (R)-carnitine = (R)-carnitinyl-CoA + 4-(trimethylamino)butanoate. It functions in the pathway amine and polyamine metabolism; carnitine metabolism. Catalyzes the reversible transfer of the CoA moiety from gamma-butyrobetainyl-CoA to L-carnitine to generate L-carnitinyl-CoA and gamma-butyrobetaine. Is also able to catalyze the reversible transfer of the CoA moiety from gamma-butyrobetainyl-CoA or L-carnitinyl-CoA to crotonobetaine to generate crotonobetainyl-CoA. The sequence is that of L-carnitine CoA-transferase from Escherichia coli (strain 55989 / EAEC).